Reading from the N-terminus, the 499-residue chain is Lysine--tRNA ligase (499 aa).

Residues Glu403 and Glu410 each coordinate Mg(2+).

It belongs to the class-II aminoacyl-tRNA synthetase family. Homodimer. It depends on Mg(2+) as a cofactor.

It localises to the cytoplasm. It carries out the reaction tRNA(Lys) + L-lysine + ATP = L-lysyl-tRNA(Lys) + AMP + diphosphate. This chain is Lysine--tRNA ligase, found in Campylobacter hominis (strain ATCC BAA-381 / DSM 21671 / CCUG 45161 / LMG 19568 / NCTC 13146 / CH001A).